We begin with the raw amino-acid sequence, 171 residues long: Probable deoxyuridine 5'-triphosphate nucleotidohydrolase (171 aa).

This sequence belongs to the dCTP deaminase family. Archaeal dUTPase subfamily.

It carries out the reaction dUTP + H2O = dUMP + diphosphate + H(+). It participates in pyrimidine metabolism; dUMP biosynthesis; dUMP from dCTP (dUTP route): step 2/2. Its function is as follows. This enzyme is involved in nucleotide metabolism: it produces dUMP, the immediate precursor of thymidine nucleotides and it decreases the intracellular concentration of dUTP so that uracil cannot be incorporated into DNA. The protein is Probable deoxyuridine 5'-triphosphate nucleotidohydrolase of Methanosarcina barkeri (strain Fusaro / DSM 804).